The sequence spans 446 residues: tRNA modification GTPase MnmE (446 aa).

Residues Arg22, Glu80, and Lys119 each contribute to the (6S)-5-formyl-5,6,7,8-tetrahydrofolate site. The 156-residue stretch at 215-370 folds into the TrmE-type G domain; that stretch reads GLSLVIAGRP…LKKVIKQVVG (156 aa). Asn225 lines the K(+) pocket. GTP is bound by residues 225 to 230, 244 to 250, and 269 to 272; these read NAGKST, TEIAGTT, and DTAG. Residue Ser229 coordinates Mg(2+). K(+)-binding residues include Thr244, Ile246, and Thr249. Thr250 contacts Mg(2+). Lys446 is a (6S)-5-formyl-5,6,7,8-tetrahydrofolate binding site.

Belongs to the TRAFAC class TrmE-Era-EngA-EngB-Septin-like GTPase superfamily. TrmE GTPase family. In terms of assembly, homodimer. Heterotetramer of two MnmE and two MnmG subunits. K(+) serves as cofactor.

Its subcellular location is the cytoplasm. Functionally, exhibits a very high intrinsic GTPase hydrolysis rate. Involved in the addition of a carboxymethylaminomethyl (cmnm) group at the wobble position (U34) of certain tRNAs, forming tRNA-cmnm(5)s(2)U34. The polypeptide is tRNA modification GTPase MnmE (Legionella pneumophila (strain Corby)).